Reading from the N-terminus, the 222-residue chain is Noggin (222 aa).

Positions 1–19 are cleaved as a signal peptide; that stretch reads MDHSQCLVTIYALMVFLGL. N-linked (GlcNAc...) asparagine glycosylation occurs at N61. 4 disulfide bridges follow: C145–C182, C168–C218, C174–C220, and C197–C205.

This sequence belongs to the noggin family. In terms of assembly, homodimer.

The protein localises to the secreted. Its function is as follows. Patterns the embryo by interrupting bone morphogenetic proteins (BMP) signaling. Binds BMP-4 and BMP-2 with high affinity. Can abolish BMP-4 activity by blocking binding to cognate cell-surface receptors. Capable of inducing dorsal development in embryos. Causes dorsal mesodermal differentiation of animal cap ectoderm when coexpressed with xWNT-8 and nuclear, sequence-specific DNA-binding protein xBRA. None of these molecules causes dorsal mesoderm formation when expressed alone. The chain is Noggin (nog) from Xenopus laevis (African clawed frog).